Reading from the N-terminus, the 219-residue chain is 23.6 kDa heat shock protein, mitochondrial (219 aa).

The N-terminal 29 residues, 1–29, are a transit peptide targeting the mitochondrion; it reads MALARQCLSKRLAAGCALARPLHAASPVA. The 116-residue stretch at 104 to 219 folds into the sHSP domain; sequence QVAETLTRPL…KRSVTEVKVR (116 aa).

Belongs to the small heat shock protein (HSP20) family. In terms of assembly, may form oligomeric structures.

The protein resides in the mitochondrion. This is 23.6 kDa heat shock protein, mitochondrial (HSP23.6) from Oryza sativa subsp. japonica (Rice).